A 251-amino-acid polypeptide reads, in one-letter code: Short chain dehydrogenase gsfK (251 aa).

NADP(+)-binding residues include L14, T33, E60, N88, and K122. Catalysis depends on proton donor residues S143 and Y161. Residues Y161, K165, V192, and T194 each contribute to the NADP(+) site. The active-site Lowers pKa of active site Tyr is K165.

Belongs to the short-chain dehydrogenases/reductases (SDR) family.

It participates in secondary metabolite biosynthesis; terpenoid biosynthesis. Short chain dehydrogenase; part of the gene cluster that mediates the biosynthesis of griseofulvin, an important antifungal drug that has been in use for a long time for treating dermatophyte infections. The first step of the pathway is the formation of the heptaketide backbone by gsfA which is initiated by priming with acetyl-CoA, followed by sequential condensations of 6 malonyl-CoA units. The resulting benzophenone can undergo a spontaneous dehydration to form norlichexanthone. However, the true precursor for the griseofulvin biosynthesis is not norlichexanthone, but the heptaketide benzophenone that is O-methylated at 3-OH by gsfB to produce griseophenone D which is further methylated at 9-OH by gsfC to yield griseophenone C. Griseophenone C is then substrate of halogenase gsfI which is responsible for the regio-specific chlorination at the C13 position to form griseophenone B. The cytochrome P450 gsfF catalyzes the coupling of orcinol and phloroglucinol rings in griseophenone B to form desmethyl-dehydrogriseofulvin A which is further methylated at 5-OH by gsfD to yield dehydrogriseofulvin. Finally, gsfE performs stereospecific reduction of enone 18 of dehydrogriseofulvin to afford the final product griseofulvin. The exact role of gsfK within the pathway has not been identified yet. This Penicillium aethiopicum protein is Short chain dehydrogenase gsfK.